The primary structure comprises 206 residues: 3-isopropylmalate dehydratase small subunit (206 aa).

It belongs to the LeuD family. LeuD type 1 subfamily. As to quaternary structure, heterodimer of LeuC and LeuD.

It catalyses the reaction (2R,3S)-3-isopropylmalate = (2S)-2-isopropylmalate. It participates in amino-acid biosynthesis; L-leucine biosynthesis; L-leucine from 3-methyl-2-oxobutanoate: step 2/4. Catalyzes the isomerization between 2-isopropylmalate and 3-isopropylmalate, via the formation of 2-isopropylmaleate. This chain is 3-isopropylmalate dehydratase small subunit, found in Acidobacterium capsulatum (strain ATCC 51196 / DSM 11244 / BCRC 80197 / JCM 7670 / NBRC 15755 / NCIMB 13165 / 161).